The primary structure comprises 78 residues: MALTRKPNNYLNFEFYSTRGINYSSFSLTELYSFEHFSEIRHRALYSLGFFLCTTIVIFSNIKFVVKILKNSVSMIQF.

Residues 44 to 66 (ALYSLGFFLCTTIVIFSNIKFVV) traverse the membrane as a helical segment.

The protein belongs to the TatC family.

The protein localises to the plastid. The protein resides in the chloroplast membrane. This is an uncharacterized protein from Dictyota dichotoma.